A 148-amino-acid polypeptide reads, in one-letter code: Small ribosomal subunit protein eS19G (148 aa).

It belongs to the eukaryotic ribosomal protein eS19 family.

In terms of biological role, elimination of the ALEP-1 gene from all somatic cells in its fully activate state may represent an alternative way to gene regulation. This chain is Small ribosomal subunit protein eS19G (RPS19G), found in Ascaris suum (Pig roundworm).